A 171-amino-acid chain; its full sequence is Interleukin-26 (171 aa).

A signal peptide spans 1–21 (MLVNFILRCGLLLVTLSLAIA).

This sequence belongs to the IL-10 family. As to quaternary structure, homodimer. As to expression, expressed in HVS transformed T-cells but not other T-cell lines or primary stimulated T-cells. Expressed in colonic T-cells including Th17 inflammatory T-cells; the expression is significantly increased in serum of patients with Crohn's disease (at protein level).

It localises to the secreted. Functionally, may play a role in local mechanisms of mucosal immunity and seems to have a pro-inflammatory function. May play a role in inflammatory bowel disease. Activates STAT1 and STAT3, MAPK1/3 (ERK1/2), JUN and AKT. Induces expression of SOCS3, TNF-alpha and IL-8, secretion of IL-8 and IL-10 and surface expression of ICAM1. Decreases proliferation of intestinal epithelial cells. Is inhibited by heparin. The chain is Interleukin-26 (IL26) from Homo sapiens (Human).